The chain runs to 931 residues: 3'-5' exonuclease DinG (931 aa).

The region spanning Val7 to Ile162 is the Exonuclease domain. The Helicase ATP-binding domain occupies Leu250–Asn510. Position 284–291 (Ala284–Thr291) interacts with ATP. The DEAH box signature appears at Asp462–His465. One can recognise a Helicase C-terminal domain in the interval Asp741–Lys897.

Belongs to the helicase family. DinG subfamily. Type 2 sub-subfamily.

The protein localises to the cytoplasm. Its function is as follows. 3'-5' exonuclease. The sequence is that of 3'-5' exonuclease DinG from Bacillus subtilis (strain 168).